The following is a 484-amino-acid chain: Cobyric acid synthase (484 aa).

Residues 251 to 438 (ALKIAVPVLP…LHGLFCSDAY (188 aa)) form the GATase cobBQ-type domain. The active-site Nucleophile is the C333. H430 is an active-site residue.

Belongs to the CobB/CobQ family. CobQ subfamily.

It participates in cofactor biosynthesis; adenosylcobalamin biosynthesis. In terms of biological role, catalyzes amidations at positions B, D, E, and G on adenosylcobyrinic A,C-diamide. NH(2) groups are provided by glutamine, and one molecule of ATP is hydrogenolyzed for each amidation. The sequence is that of Cobyric acid synthase from Rhizobium rhizogenes (strain K84 / ATCC BAA-868) (Agrobacterium radiobacter).